Reading from the N-terminus, the 1042-residue chain is FHIP family protein AAEL005291 (1042 aa).

Over residues 1–14 (MSWLRSSPLRQSFS) the composition is skewed to polar residues. Disordered regions lie at residues 1-31 (MSWLRSSPLRQSFSKAGGGSGSGASSRGGNS), 494-514 (NNTSQASSMLGSGPSSMPQGG), 821-866 (PHSG…KRND), and 905-977 (SNSS…GSPH). Residues 839 to 859 (VSMTSNLSQTTPMQLTPSSSY) show a composition bias toward polar residues. 2 stretches are compositionally biased toward low complexity: residues 905–940 (SNSSSISHQSSSTPSPAGSQQYLSSNSSGVSSFMGS) and 956–976 (PSIGGPPSSMGPTSLTSTGSP).

This sequence belongs to the FHIP family.

The sequence is that of FHIP family protein AAEL005291 from Aedes aegypti (Yellowfever mosquito).